A 201-amino-acid polypeptide reads, in one-letter code: ATP-dependent Clp protease proteolytic subunit (201 aa).

The active-site Nucleophile is S97. H122 is a catalytic residue.

It belongs to the peptidase S14 family. In terms of assembly, fourteen ClpP subunits assemble into 2 heptameric rings which stack back to back to give a disk-like structure with a central cavity, resembling the structure of eukaryotic proteasomes.

Its subcellular location is the cytoplasm. The enzyme catalyses Hydrolysis of proteins to small peptides in the presence of ATP and magnesium. alpha-casein is the usual test substrate. In the absence of ATP, only oligopeptides shorter than five residues are hydrolyzed (such as succinyl-Leu-Tyr-|-NHMec, and Leu-Tyr-Leu-|-Tyr-Trp, in which cleavage of the -Tyr-|-Leu- and -Tyr-|-Trp bonds also occurs).. Functionally, cleaves peptides in various proteins in a process that requires ATP hydrolysis. Has a chymotrypsin-like activity. Plays a major role in the degradation of misfolded proteins. This Nitratidesulfovibrio vulgaris (strain ATCC 29579 / DSM 644 / CCUG 34227 / NCIMB 8303 / VKM B-1760 / Hildenborough) (Desulfovibrio vulgaris) protein is ATP-dependent Clp protease proteolytic subunit.